A 783-amino-acid chain; its full sequence is Polyribonucleotide nucleotidyltransferase 1, mitochondrial (783 aa).

A mitochondrion-targeting transit peptide spans 1–45 (MAACRYCCSCLRLRPLSDGPFLLPRRDRALTQLQVRALWSSAGSR). N6-acetyllysine occurs at positions 250, 264, 285, and 289. At K552 the chain carries N6-succinyllysine. Positions 605–664 (PVVETVQVPLSKRAKFVGPGGYNLKKLQAETGVTISQVDEETFSVFAPTPSAMHEARDFI) constitute a KH domain. Positions 679–750 (GAVYTATITE…ADGRMRLSRK (72 aa)) constitute an S1 motif domain. Phosphoserine occurs at positions 754 and 782.

It belongs to the polyribonucleotide nucleotidyltransferase family. As to quaternary structure, homotrimer; in free form. Homooligomer. Component of the mitochondrial degradosome (mtEXO) complex which is a heteropentamer containing 2 copies of SUPV3L1 and 3 copies of PNPT1. As part of the mitochondrial degradosome complex, interacts with GRSF1 in an RNA-dependent manner; the interaction enhances the activity of the complex. Interacts with TCL1A; the interaction has no effect on PNPT1 exonuclease activity.

The protein resides in the cytoplasm. The protein localises to the mitochondrion matrix. It is found in the mitochondrion intermembrane space. It catalyses the reaction RNA(n+1) + phosphate = RNA(n) + a ribonucleoside 5'-diphosphate. Functionally, RNA-binding protein implicated in numerous RNA metabolic processes. Catalyzes the phosphorolysis of single-stranded polyribonucleotides processively in the 3'-to-5' direction. Mitochondrial intermembrane factor with RNA-processing exoribonulease activity. Component of the mitochondrial degradosome (mtEXO) complex, that degrades 3' overhang double-stranded RNA with a 3'-to-5' directionality in an ATP-dependent manner. Involved in the degradation of non-coding mitochondrial transcripts (MT-ncRNA) and tRNA-like molecules. Required for correct processing and polyadenylation of mitochondrial mRNAs. Plays a role as a cytoplasmic RNA import factor that mediates the translocation of small RNA components, like the 5S RNA, the RNA subunit of ribonuclease P and the mitochondrial RNA-processing (MRP) RNA, into the mitochondrial matrix. Plays a role in mitochondrial morphogenesis and respiration; regulates the expression of the electron transport chain (ETC) components at the mRNA and protein levels. In the cytoplasm, shows a 3'-to-5' exoribonuclease mediating mRNA degradation activity; degrades c-myc mRNA upon treatment with IFNB1/IFN-beta, resulting in a growth arrest in melanoma cells. Regulates the stability of specific mature miRNAs in melanoma cells; specifically and selectively degrades miR-221, preferentially. Also plays a role in RNA cell surveillance by cleaning up oxidized RNAs. Binds to the RNA subunit of ribonuclease P, MRP RNA and miR-221 microRNA. The polypeptide is Polyribonucleotide nucleotidyltransferase 1, mitochondrial (Homo sapiens (Human)).